We begin with the raw amino-acid sequence, 243 residues long: tRNA (guanine-N(1)-)-methyltransferase (243 aa).

S-adenosyl-L-methionine contacts are provided by residues Gly-108 and 127–132; that span reads LGDFVL.

This sequence belongs to the RNA methyltransferase TrmD family. Homodimer.

Its subcellular location is the cytoplasm. It carries out the reaction guanosine(37) in tRNA + S-adenosyl-L-methionine = N(1)-methylguanosine(37) in tRNA + S-adenosyl-L-homocysteine + H(+). Functionally, specifically methylates guanosine-37 in various tRNAs. The polypeptide is tRNA (guanine-N(1)-)-methyltransferase (Streptococcus pyogenes serotype M2 (strain MGAS10270)).